The following is a 109-amino-acid chain: Small ribosomal subunit protein eS25 (109 aa).

Residues 1–36 (MGGASKKPISTVEKRMKKMAEEQQKKQQKRATTKTG) form a disordered region. Positions 12–25 (VEKRMKKMAEEQQK) are enriched in basic and acidic residues.

This sequence belongs to the eukaryotic ribosomal protein eS25 family.

This chain is Small ribosomal subunit protein eS25 (rps25e), found in Sulfurisphaera tokodaii (strain DSM 16993 / JCM 10545 / NBRC 100140 / 7) (Sulfolobus tokodaii).